Reading from the N-terminus, the 595-residue chain is CDPK-related kinase 3 (595 aa).

The disordered stretch occupies residues 1-131 (MGQCYGKVNQ…GTEPEQSLDK (131 aa)). G2 carries the N-myristoyl glycine lipid modification. The span at 20–37 (NTTTYVVSGDGNQIQPLT) shows a compositional bias: polar residues. Residues 111–124 (KPKEGPIPEERGTE) show a composition bias toward basic and acidic residues. The region spanning 143 to 405 (YELGKEVGRG…AVQALTHPWL (263 aa)) is the Protein kinase domain. Residues 149 to 157 (VGRGHFGHT) and K175 each bind ATP. Catalysis depends on D271, which acts as the Proton acceptor. Residue S311 is modified to Phosphoserine. A Phosphoserine; by CPK1 and CPK34 modification is found at S353. Positions 409–439 (SRVIPLDILIYKLVKAYLHATPLRRAALKAL) are autoinhibitory domain. Residues 428–448 (ATPLRRAALKALAKALTENEL) are calmodulin binding (CaMBD). EF-hand domains are found at residues 446–482 (NELVYLRAQFMLLGPNKDGSVSLENFKTALMQNATDA), 483–518 (MRESRVPEILHTMESLAYRKMYFEEFCAAAISIHQL), 519–558 (EAVDAWEEIATAGFQHFETEGNRVITIEELARELNVGASA), and 559–588 (YGHLRDWVRSSDGKLSYLGFTKFLHGVTLR). Ca(2+)-binding residues include N461, D463, S465, K502, E507, N540, E547, S568, D570, and K572. At S574 the chain carries Phosphoserine.

It belongs to the protein kinase superfamily. Ser/Thr protein kinase family. CDPK subfamily. In terms of assembly, binds calmodulin (CaM) in a calcium-dependent manner. Interacts with GLN1-1. In terms of processing, autophosphorylated. In terms of tissue distribution, ubiquitously expressed with higher levels in siliques and roots, especially at the root cap. Particularly present in vascular bundles of stems and leaves.

The protein localises to the cytoplasm. It localises to the membrane. It catalyses the reaction L-seryl-[protein] + ATP = O-phospho-L-seryl-[protein] + ADP + H(+). It carries out the reaction L-threonyl-[protein] + ATP = O-phospho-L-threonyl-[protein] + ADP + H(+). With respect to regulation, not activated by calcium. Autophosphorylation may play an important role in the regulation of the kinase activity. Stimulated by magnesium ions (optimum at 10-15 mM) and manganese ions. In terms of biological role, may play a role in signal transduction pathways that involve calcium as a second messenger. Serine/threonine kinase that phosphorylates histone H3 an GLN1-1. The protein is CDPK-related kinase 3 (CRK3) of Arabidopsis thaliana (Mouse-ear cress).